A 224-amino-acid polypeptide reads, in one-letter code: Inner membrane-spanning protein YciB (224 aa).

The next 6 membrane-spanning stretches (helical) occupy residues 20–40 (GVNPVLKLVLELGPLLVFFFA), 61–81 (IFVATGLFMAATAIALIASWL), 86–106 (LPIMPMVSGVVVFIFGALTLY), 123–143 (LFGGVLLGGLYFGRSLLGYVF), 156–176 (KLTFRWGLFFLFLAVVNEVVW), and 187–207 (FKVWGIMPITLLFTFSQMPLI).

Belongs to the YciB family.

It localises to the cell inner membrane. Functionally, plays a role in cell envelope biogenesis, maintenance of cell envelope integrity and membrane homeostasis. This is Inner membrane-spanning protein YciB from Mesorhizobium japonicum (strain LMG 29417 / CECT 9101 / MAFF 303099) (Mesorhizobium loti (strain MAFF 303099)).